Here is a 142-residue protein sequence, read N- to C-terminus: Putative pre-16S rRNA nuclease (142 aa).

Belongs to the YqgF nuclease family.

It localises to the cytoplasm. Functionally, could be a nuclease involved in processing of the 5'-end of pre-16S rRNA. In Lactobacillus delbrueckii subsp. bulgaricus (strain ATCC BAA-365 / Lb-18), this protein is Putative pre-16S rRNA nuclease.